The following is a 119-amino-acid chain: Holo-[acyl-carrier-protein] synthase (119 aa).

Mg(2+) contacts are provided by Asp-8 and Glu-58.

Belongs to the P-Pant transferase superfamily. AcpS family. Requires Mg(2+) as cofactor.

The protein resides in the cytoplasm. It carries out the reaction apo-[ACP] + CoA = holo-[ACP] + adenosine 3',5'-bisphosphate + H(+). Functionally, transfers the 4'-phosphopantetheine moiety from coenzyme A to a Ser of acyl-carrier-protein. In Lactobacillus johnsonii (strain CNCM I-12250 / La1 / NCC 533), this protein is Holo-[acyl-carrier-protein] synthase.